Consider the following 613-residue polypeptide: ADP-ribosylation factor-binding protein GGA2 (613 aa).

The 131-residue stretch at 33–163 folds into the VHS domain; the sequence is ATDPSMSEQD…MLKKQGIIKQ (131 aa). The 128-residue stretch at 188 to 315 folds into the GAT domain; sequence DEEKSKLLTR…GVLLYKQVME (128 aa). The unstructured hinge stretch occupies residues 316–483; the sequence is GRVTFGNRVT…VFVPLESVKP (168 aa). Disordered regions lie at residues 389–414 and 435–466; these read GQNC…NPSA and SQKS…SPSS. The segment covering 399 to 414 has biased composition (polar residues); it reads PSSSTLPGGGVQNPSA. The residue at position 400 (Ser400) is a Phosphoserine. One can recognise a GAE domain in the interval 484 to 605; the sequence is SSLPPLIVYD…SEVGEVKDFP (122 aa).

The protein belongs to the GGA protein family. In terms of assembly, monomer. Interacts with NECAP1, TSG101, UBC and AFTPH/aftiphilin. Interacts with CNST. Interacts with GGA1 and GGA3. Binds to clathrin and activated ARFs, such as ARF1, ARF5 and ARF6. Binds RABEP1 and RABGEF1. Interacts with the type-I membrane proteins LRP3, M6PR/CD-MPR, IGF2R/CI-MPR and BACE1. Interacts (via N-terminal VHS domain) with SORL1/sorLA and SORT1 (via C-terminal cytosolic domain). Binds the accessory proteins CCDC91, P200, SYNRG, EPN4 and NECAP2. Interacts with ADRA2B. Interacts (via VHS domain) with PIK4B; the interaction is important for PIK4B location at the Golgi apparatus membrane. Post-translationally, ubiquitinated. Ubiquitously expressed.

The protein localises to the golgi apparatus. It localises to the trans-Golgi network membrane. The protein resides in the endosome membrane. Its subcellular location is the early endosome membrane. In terms of biological role, plays a role in protein sorting and trafficking between the trans-Golgi network (TGN) and endosomes. Mediates the ARF-dependent recruitment of clathrin to the TGN and binds ubiquitinated proteins and membrane cargo molecules with a cytosolic acidic cluster-dileucine (DXXLL) motif. Mediates export of the GPCR receptor ADRA2B to the cell surface. Regulates retrograde transport of phosphorylated form of BACE1 from endosomes to the trans-Golgi network. This Homo sapiens (Human) protein is ADP-ribosylation factor-binding protein GGA2 (GGA2).